The primary structure comprises 399 residues: Elongation factor Tu (399 aa).

Positions 10 to 209 constitute a tr-type G domain; sequence KPHVNIGTIG…AVDEYIPTPE (200 aa). The interval 19–26 is G1; the sequence is GHVDHGKT. 19-26 serves as a coordination point for GTP; the sequence is GHVDHGKT. Thr-26 is a Mg(2+) binding site. Residues 60–64 are G2; the sequence is GITIA. The interval 81–84 is G3; the sequence is DCPG. GTP contacts are provided by residues 81-85 and 136-139; these read DCPGH and NKED. The tract at residues 136–139 is G4; sequence NKED. The interval 174–176 is G5; it reads SAL.

Belongs to the TRAFAC class translation factor GTPase superfamily. Classic translation factor GTPase family. EF-Tu/EF-1A subfamily. As to quaternary structure, monomer.

Its subcellular location is the cytoplasm. It carries out the reaction GTP + H2O = GDP + phosphate + H(+). GTP hydrolase that promotes the GTP-dependent binding of aminoacyl-tRNA to the A-site of ribosomes during protein biosynthesis. The chain is Elongation factor Tu from Nitratiruptor sp. (strain SB155-2).